A 395-amino-acid polypeptide reads, in one-letter code: Tryptophan synthase beta chain (395 aa).

Residue Lys-86 is modified to N6-(pyridoxal phosphate)lysine.

The protein belongs to the TrpB family. As to quaternary structure, tetramer of two alpha and two beta chains. Pyridoxal 5'-phosphate serves as cofactor.

The catalysed reaction is (1S,2R)-1-C-(indol-3-yl)glycerol 3-phosphate + L-serine = D-glyceraldehyde 3-phosphate + L-tryptophan + H2O. It participates in amino-acid biosynthesis; L-tryptophan biosynthesis; L-tryptophan from chorismate: step 5/5. Functionally, the beta subunit is responsible for the synthesis of L-tryptophan from indole and L-serine. The protein is Tryptophan synthase beta chain of Pseudoalteromonas atlantica (strain T6c / ATCC BAA-1087).